Here is a 106-residue protein sequence, read N- to C-terminus: Aspartyl/glutamyl-tRNA(Asn/Gln) amidotransferase subunit C (106 aa).

It belongs to the GatC family. As to quaternary structure, heterotrimer of A, B and C subunits.

The catalysed reaction is L-glutamyl-tRNA(Gln) + L-glutamine + ATP + H2O = L-glutaminyl-tRNA(Gln) + L-glutamate + ADP + phosphate + H(+). It carries out the reaction L-aspartyl-tRNA(Asn) + L-glutamine + ATP + H2O = L-asparaginyl-tRNA(Asn) + L-glutamate + ADP + phosphate + 2 H(+). In terms of biological role, allows the formation of correctly charged Asn-tRNA(Asn) or Gln-tRNA(Gln) through the transamidation of misacylated Asp-tRNA(Asn) or Glu-tRNA(Gln) in organisms which lack either or both of asparaginyl-tRNA or glutaminyl-tRNA synthetases. The reaction takes place in the presence of glutamine and ATP through an activated phospho-Asp-tRNA(Asn) or phospho-Glu-tRNA(Gln). The protein is Aspartyl/glutamyl-tRNA(Asn/Gln) amidotransferase subunit C of Lactiplantibacillus plantarum (strain ATCC BAA-793 / NCIMB 8826 / WCFS1) (Lactobacillus plantarum).